The primary structure comprises 260 residues: Triosephosphate isomerase (260 aa).

A substrate-binding site is contributed by 11-13 (NWK). Histidine 103 functions as the Electrophile in the catalytic mechanism. Glutamate 175 serves as the catalytic Proton acceptor. Substrate contacts are provided by residues glycine 181, serine 220, and 241–242 (GG).

Belongs to the triosephosphate isomerase family. Homodimer.

The protein resides in the cytoplasm. The catalysed reaction is D-glyceraldehyde 3-phosphate = dihydroxyacetone phosphate. It functions in the pathway carbohydrate biosynthesis; gluconeogenesis. Its pathway is carbohydrate degradation; glycolysis; D-glyceraldehyde 3-phosphate from glycerone phosphate: step 1/1. Involved in the gluconeogenesis. Catalyzes stereospecifically the conversion of dihydroxyacetone phosphate (DHAP) to D-glyceraldehyde-3-phosphate (G3P). The chain is Triosephosphate isomerase from Shewanella sp. (strain W3-18-1).